The sequence spans 328 residues: Purple acid phosphatase 7 (328 aa).

The signal sequence occupies residues 1-24 (MKMHVCFSVILMFLSIFFINGALS). Fe cation is bound at residue aspartate 48. The N-linked (GlcNAc...) asparagine glycan is linked to asparagine 56. 2 residues coordinate Fe cation: aspartate 81 and tyrosine 84. Aspartate 81 provides a ligand contact to Zn(2+). Residues asparagine 119 and histidine 213 each coordinate Zn(2+). The Proton donor role is filled by histidine 222. Histidine 248 contacts Zn(2+). 248 to 250 (HDH) contributes to the substrate binding site. Histidine 250 provides a ligand contact to Fe cation.

It belongs to the metallophosphoesterase superfamily. Purple acid phosphatase family. Homodimer. Requires Fe cation as cofactor. It depends on Zn(2+) as a cofactor. Expressed in roots, stems, leaves, flowers and siliques.

Its subcellular location is the secreted. The enzyme catalyses a phosphate monoester + H2O = an alcohol + phosphate. In Arabidopsis thaliana (Mouse-ear cress), this protein is Purple acid phosphatase 7 (PAP7).